We begin with the raw amino-acid sequence, 233 residues long: Uridylate kinase (233 aa).

Residue G9–S10 participates in ATP binding. A UMP-binding site is contributed by G43. Residues G44 and R48 each coordinate ATP. Residues D65 and V113 to T119 contribute to the UMP site. Positions 139, 145, and 148 each coordinate ATP.

It belongs to the UMP kinase family. In terms of assembly, homohexamer.

It is found in the cytoplasm. The enzyme catalyses UMP + ATP = UDP + ADP. It participates in pyrimidine metabolism; CTP biosynthesis via de novo pathway; UDP from UMP (UMPK route): step 1/1. With respect to regulation, inhibited by UTP. Functionally, catalyzes the reversible phosphorylation of UMP to UDP. The polypeptide is Uridylate kinase (Methanosarcina mazei (strain ATCC BAA-159 / DSM 3647 / Goe1 / Go1 / JCM 11833 / OCM 88) (Methanosarcina frisia)).